The following is a 208-amino-acid chain: 3-demethoxyubiquinol 3-hydroxylase (208 aa).

Residues Glu-57, Glu-87, His-90, Glu-139, Glu-171, and His-174 each contribute to the Fe cation site.

This sequence belongs to the COQ7 family. Fe cation is required as a cofactor.

The protein resides in the cell membrane. The enzyme catalyses a 5-methoxy-2-methyl-3-(all-trans-polyprenyl)benzene-1,4-diol + AH2 + O2 = a 3-demethylubiquinol + A + H2O. It functions in the pathway cofactor biosynthesis; ubiquinone biosynthesis. In terms of biological role, catalyzes the hydroxylation of 2-nonaprenyl-3-methyl-6-methoxy-1,4-benzoquinol during ubiquinone biosynthesis. The polypeptide is 3-demethoxyubiquinol 3-hydroxylase (Verminephrobacter eiseniae (strain EF01-2)).